A 263-amino-acid chain; its full sequence is Small ribosomal subunit protein eS4, X isoform (263 aa).

The region spanning 42-104 (LPLIIFLRNR…TGEHFRLVYD (63 aa)) is the S4 RNA-binding domain. Residue lysine 230 forms a Glycyl lysine isopeptide (Lys-Gly) (interchain with G-Cter in SUMO2) linkage. Lysine 233 carries the N6-acetyllysine modification.

Belongs to the eukaryotic ribosomal protein eS4 family. Component of the small ribosomal subunit. Part of the small subunit (SSU) processome, composed of more than 70 proteins and the RNA chaperone small nucleolar RNA (snoRNA) U3. Identified in a IGF2BP1-dependent mRNP granule complex containing untranslated mRNAs.

The protein localises to the cytoplasm. The protein resides in the nucleus. It is found in the nucleolus. Its function is as follows. Component of the small ribosomal subunit. The ribosome is a large ribonucleoprotein complex responsible for the synthesis of proteins in the cell. Part of the small subunit (SSU) processome, first precursor of the small eukaryotic ribosomal subunit. During the assembly of the SSU processome in the nucleolus, many ribosome biogenesis factors, an RNA chaperone and ribosomal proteins associate with the nascent pre-rRNA and work in concert to generate RNA folding, modifications, rearrangements and cleavage as well as targeted degradation of pre-ribosomal RNA by the RNA exosome. The sequence is that of Small ribosomal subunit protein eS4, X isoform (RPS4X) from Monodelphis domestica (Gray short-tailed opossum).